Consider the following 2025-residue polypeptide: E3 ubiquitin-protein ligase TTC3 (2025 aa).

The segment at 1–230 (MDNFAEGDFT…TQSCMDCIEE (230 aa)) is interaction with POLG. TPR repeat units follow at residues 231–264 (GELMKMKGNEEFSKERFDIAIIYYTRAIEYRPEN) and 266–298 (LLYGNRALCFLRTGQFRNALGDGKRATILKNTW). Serine 378 is modified (phosphoserine; by PKB/AKT2). The tract at residues 423–458 (DCHPEFSPPSSQPPKHKGKQKSRNNESEKFSSSSPL) is disordered. TPR repeat units follow at residues 536–572 (VLVVYGLAISLLGIGQPEELSEAENQFKRIIEHYPSE) and 576–609 (CLAYCGIGKVYLKKNRFLEALNHFEKARTLIYRL). Residues 786–805 (ERMEEDLRESNPPKNEEQKE) are disordered. Residues 793–805 (RESNPPKNEEQKE) are compositionally biased toward basic and acidic residues. Position 1009 is a phosphoserine (serine 1009). Disordered stretches follow at residues 1012–1068 (APFS…GPFA), 1215–1295 (KPDV…SCNS), 1773–1842 (DPSV…SPKK), and 1894–1944 (ILDE…QKAE). A compositionally biased stretch (basic residues) spans 1019–1029 (VKNKSKKKKPK). The segment covering 1038–1052 (SGTTSVTSNNEIITS) has biased composition (polar residues). The residue at position 1061 (serine 1061) is a Phosphoserine. The span at 1894-1912 (ILDEQKKKKPNPGKDKRTY) shows a compositional bias: basic and acidic residues. The segment covering 1913-1928 (EPSSATPVTRSSQGSP) has biased composition (polar residues). The segment at 1957–1997 (CEICHEVFKSKNVRVLKCGHKYHKGCFKQWLKGQSACPACQ) adopts an RING-type zinc-finger fold. The tract at residues 2004–2025 (EESPSGRGWPSQNQELPSCSSR) is disordered. Residues 2013-2025 (PSQNQELPSCSSR) show a composition bias toward polar residues.

Interacts (when phosphorylated on Ser-378) with AKT1, AKT2 and AKT3 (when phosphorylated). Interacts with CIT. Interacts with POLG. Interacts with HSP70. Interacts with SMURF2. In terms of processing, phosphorylation on Ser-378 by Akt is required for ubiquitin ligase activity. Post-translationally, proteolytically cleaved into differently sized N- and C-terminal fragments. In terms of tissue distribution, found in all tissues examined.

It localises to the nucleus. It is found in the cytoplasm. The protein resides in the golgi apparatus. The catalysed reaction is S-ubiquitinyl-[E2 ubiquitin-conjugating enzyme]-L-cysteine + [acceptor protein]-L-lysine = [E2 ubiquitin-conjugating enzyme]-L-cysteine + N(6)-ubiquitinyl-[acceptor protein]-L-lysine.. The protein operates within protein modification; protein ubiquitination. In terms of biological role, E3 ubiquitin-protein ligase which catalyzes the formation of 'Lys-48'-polyubiquitin chains. Mediates the ubiquitination and subsequent degradation of phosphorylated Akt (AKT1, AKT2 and AKT3) in the nucleus. Acts as a terminal regulator of Akt signaling after activation; its phosphorylation by Akt, which is a prerequisite for ubiquitin ligase activity, suggests the existence of a regulation mechanism required to control Akt levels after activation. Positively regulates TGFB1-induced epithelial-mesenchymal transition and myofibroblast differentiation by mediating the ubiquitination and subsequent degradation of SMURF2. Regulates neuronal differentiation by regulating actin remodeling and Golgi organization via a signaling cascade involving RHOA, CIT and ROCK. Inhibits cell proliferation. In Homo sapiens (Human), this protein is E3 ubiquitin-protein ligase TTC3 (TTC3).